Consider the following 172-residue polypeptide: ATP synthase subunit b (172 aa).

Residues 5–24 traverse the membrane as a helical segment; the sequence is LLMLLLLGSVSLFANEAAAS.

It belongs to the ATPase B chain family. F-type ATPases have 2 components, F(1) - the catalytic core - and F(0) - the membrane proton channel. F(1) has five subunits: alpha(3), beta(3), gamma(1), delta(1), epsilon(1). F(0) has three main subunits: a(1), b(2) and c(10-14). The alpha and beta chains form an alternating ring which encloses part of the gamma chain. F(1) is attached to F(0) by a central stalk formed by the gamma and epsilon chains, while a peripheral stalk is formed by the delta and b chains.

Its subcellular location is the cell inner membrane. Its function is as follows. F(1)F(0) ATP synthase produces ATP from ADP in the presence of a proton or sodium gradient. F-type ATPases consist of two structural domains, F(1) containing the extramembraneous catalytic core and F(0) containing the membrane proton channel, linked together by a central stalk and a peripheral stalk. During catalysis, ATP synthesis in the catalytic domain of F(1) is coupled via a rotary mechanism of the central stalk subunits to proton translocation. In terms of biological role, component of the F(0) channel, it forms part of the peripheral stalk, linking F(1) to F(0). In Nitratiruptor sp. (strain SB155-2), this protein is ATP synthase subunit b.